We begin with the raw amino-acid sequence, 349 residues long: Flagellar P-ring protein (349 aa).

The first 20 residues, Met-1–Ala-20, serve as a signal peptide directing secretion.

This sequence belongs to the FlgI family. The basal body constitutes a major portion of the flagellar organelle and consists of four rings (L,P,S, and M) mounted on a central rod.

It localises to the periplasm. The protein localises to the bacterial flagellum basal body. Its function is as follows. Assembles around the rod to form the L-ring and probably protects the motor/basal body from shearing forces during rotation. This is Flagellar P-ring protein from Wolinella succinogenes (strain ATCC 29543 / DSM 1740 / CCUG 13145 / JCM 31913 / LMG 7466 / NCTC 11488 / FDC 602W) (Vibrio succinogenes).